Here is a 125-residue protein sequence, read N- to C-terminus: Large ribosomal subunit protein bL12 (125 aa).

The protein belongs to the bacterial ribosomal protein bL12 family. As to quaternary structure, homodimer. Part of the ribosomal stalk of the 50S ribosomal subunit. Forms a multimeric L10(L12)X complex, where L10 forms an elongated spine to which 2 to 4 L12 dimers bind in a sequential fashion. Binds GTP-bound translation factors.

Forms part of the ribosomal stalk which helps the ribosome interact with GTP-bound translation factors. Is thus essential for accurate translation. In Francisella tularensis subsp. novicida (strain U112), this protein is Large ribosomal subunit protein bL12.